The sequence spans 205 residues: Small ribosomal subunit protein uS4c (205 aa).

A disordered region spans residues 22–42 (TSKISKKTNTPGEHGQPQNKL). Over residues 28–42 (KTNTPGEHGQPQNKL) the composition is skewed to polar residues. In terms of domain architecture, S4 RNA-binding spans 94–157 (MRLDNIVYRL…ASRDLVKKFV (64 aa)).

The protein belongs to the universal ribosomal protein uS4 family. In terms of assembly, part of the 30S ribosomal subunit. Contacts protein S5. The interaction surface between S4 and S5 is involved in control of translational fidelity.

Its subcellular location is the plastid. It is found in the chloroplast. Its function is as follows. One of the primary rRNA binding proteins, it binds directly to 16S rRNA where it nucleates assembly of the body of the 30S subunit. In terms of biological role, with S5 and S12 plays an important role in translational accuracy. The sequence is that of Small ribosomal subunit protein uS4c (rps4) from Tupiella akineta (Green alga).